Reading from the N-terminus, the 416-residue chain is Isocitrate dehydrogenase [NADP] (416 aa).

Residues 77-79 (TIT) and Arg-84 contribute to the NADP(+) site. Substrate is bound at residue Thr-79. Substrate contacts are provided by residues 96–102 (SPNGTIR), Arg-111, and Arg-134. Asp-254 provides a ligand contact to Mn(2+). Lys-262 is an NADP(+) binding site. Residue Asp-277 coordinates Mn(2+). NADP(+)-binding positions include 312-317 (GTVTRH) and Asn-330.

Belongs to the isocitrate and isopropylmalate dehydrogenases family. Heterodimer. The cofactor is Mg(2+). Requires Mn(2+) as cofactor.

It localises to the cytoplasm. It catalyses the reaction D-threo-isocitrate + NADP(+) = 2-oxoglutarate + CO2 + NADPH. Functionally, may supply 2-oxoglutarate for amino acid biosynthesis and ammonia assimilation via the glutamine synthetase/glutamate synthase (GS/GOGAT) pathway. In Solanum tuberosum (Potato), this protein is Isocitrate dehydrogenase [NADP] (ICDH-1).